The chain runs to 2486 residues: Nonribosomal peptide synthetase nanA (2486 aa).

The segment at 231 to 637 (FSARQPLSPA…GRRGTQVKLR (407 aa)) is adenylation 1. The region spanning 786–860 (TDIELKVHAL…DLARSAKETS (75 aa)) is the Carrier 1 domain. At serine 820 the chain carries O-(pantetheine 4'-phosphoryl)serine. The interval 902–1314 (EDAYPCTPLQ…LKSVPRVSSQ (413 aa)) is condensation 1. An adenylation 2 region spans residues 1339-1735 (RAQARKTPLA…GRIGDQMKIR (397 aa)). 2 consecutive Carrier domains span residues 1872–1948 (PPST…SSAS) and 2404–2480 (SSSE…QTQA). O-(pantetheine 4'-phosphoryl)serine is present on residues serine 1909 and serine 2441. Residues 2404–2480 (SSSETIVEPL…KLARLLQTQA (77 aa)) are condensation 2.

It belongs to the NRP synthetase family.

The protein operates within secondary metabolite biosynthesis. Its function is as follows. Nonribosomal peptide synthetase; part of the gene cluster that mediates the biosynthesis of the benzazepine alkaloid nanangelenin A which contains an unprecedented 3,4-dihydro-1-benzazepine-2,5-dione-N-prenyl-N-acetoxy-anthranilamide scaffold. The first step of nanangelenin biosynthesis is catalyzed by the indoleamine 2,3-dioxygenase nanC which produces N-formyl-kynurenine through the catabolism of tryptophan. The two-module NRPS nanA then utilizes anthranilate (Ant) and L-kynurenine (L-Kyn) to assemble the dipeptide product nanangelenin B. The first adenylation domain of nanA (A1) loads anthranilate onto the T1 domain, while A2 loads kynurenine, generated through spontaneous nonenzymatic deformylation of the nanC-supplied N-formyl-kynurenine. The peptide bond formation between the tethered amino acids is catalyzed by the first condensation domain (C1) between anthranilate's carbonyl carbon and kynurenine's aliphatic primary amine. The second C domain (C2) catalyzes the final cyclization event between the aromatic amine of kynurenine and the tethered carbonyl carbon, yielding nanangelenin B. The terminal T3 domain enhances the catalytic efficiency of C2, suggesting the T2-tethered Ant-L-Kyn is transferred to T3 prior to cyclization by C2. Once released from nanA, nanangelenin B is then prenylated by the prenyltransferase nanD to form nanangelenin C. Nanangelenin C is then N-hydroxylated by the FAD-dependent monooxygenase nanF and further acetylated by the acetyltransferase nanB to yield nanangelenin F. Finally, the N-methyltransferase nanE methylates the amide nitrogen of 1-benzazepine to convert nanangelenin F into nanangelenin A. NanE is also able to methylate most of the intermediates of the pathway such as nanangelenin B and nanangelenin C to produce nanangelenin D and nanangelenin E, respectively. This chain is Nonribosomal peptide synthetase nanA, found in Aspergillus nanangensis.